Here is a 689-residue protein sequence, read N- to C-terminus: Glycine--tRNA ligase beta subunit (689 aa).

Belongs to the class-II aminoacyl-tRNA synthetase family. Tetramer of two alpha and two beta subunits.

Its subcellular location is the cytoplasm. The enzyme catalyses tRNA(Gly) + glycine + ATP = glycyl-tRNA(Gly) + AMP + diphosphate. In Coxiella burnetii (strain RSA 493 / Nine Mile phase I), this protein is Glycine--tRNA ligase beta subunit (glyS).